A 352-amino-acid polypeptide reads, in one-letter code: Uroporphyrinogen decarboxylase (352 aa).

Substrate contacts are provided by residues 27-31, Asp-77, Tyr-154, Thr-209, and His-325; that span reads RQAGR.

Belongs to the uroporphyrinogen decarboxylase family. As to quaternary structure, homodimer.

The protein localises to the cytoplasm. The enzyme catalyses uroporphyrinogen III + 4 H(+) = coproporphyrinogen III + 4 CO2. Its pathway is porphyrin-containing compound metabolism; protoporphyrin-IX biosynthesis; coproporphyrinogen-III from 5-aminolevulinate: step 4/4. Its function is as follows. Catalyzes the decarboxylation of four acetate groups of uroporphyrinogen-III to yield coproporphyrinogen-III. The chain is Uroporphyrinogen decarboxylase from Legionella pneumophila subsp. pneumophila (strain Philadelphia 1 / ATCC 33152 / DSM 7513).